The following is a 436-amino-acid chain: Histidinol dehydrogenase (436 aa).

Residues Tyr130, Gln191, and Asn214 each contribute to the NAD(+) site. The substrate site is built by Ser237, Gln259, and His262. Zn(2+) is bound by residues Gln259 and His262. Active-site proton acceptor residues include Glu327 and His328. Residues His328, Asp361, Glu415, and His420 each coordinate substrate. Asp361 lines the Zn(2+) pocket. His420 provides a ligand contact to Zn(2+).

It belongs to the histidinol dehydrogenase family. The cofactor is Zn(2+).

The catalysed reaction is L-histidinol + 2 NAD(+) + H2O = L-histidine + 2 NADH + 3 H(+). Its pathway is amino-acid biosynthesis; L-histidine biosynthesis; L-histidine from 5-phospho-alpha-D-ribose 1-diphosphate: step 9/9. Its function is as follows. Catalyzes the sequential NAD-dependent oxidations of L-histidinol to L-histidinaldehyde and then to L-histidine. This chain is Histidinol dehydrogenase, found in Geobacter metallireducens (strain ATCC 53774 / DSM 7210 / GS-15).